We begin with the raw amino-acid sequence, 146 residues long: Snaclec stejaggregin-B subunit beta-1 (146 aa).

An N-terminal signal peptide occupies residues 1–23 (MGRFIFVSFGLLVVFLSLSGTGA). 3 disulfides stabilise this stretch: Cys25/Cys36, Cys53/Cys142, and Cys119/Cys134. The C-type lectin domain maps to 32-143 (YDLYCYRVFQ…CSQTYPFVCK (112 aa)).

It belongs to the snaclec family. Heteromultimer; disulfide-linked. In terms of tissue distribution, expressed by the venom gland.

Its subcellular location is the secreted. Interferes with one step of hemostasis (modulation of platelet aggregation, or coagulation cascade, for example). The protein is Snaclec stejaggregin-B subunit beta-1 of Trimeresurus stejnegeri (Chinese green tree viper).